A 1062-amino-acid chain; its full sequence is Carbamoyl phosphate synthase large chain (1062 aa).

The tract at residues 1 to 401 (MPKRTDIHKI…AMQKAVQSLE (401 aa)) is carboxyphosphate synthetic domain. 12 residues coordinate ATP: Arg129, Arg169, Gly175, Gly176, Lys208, Ile210, Glu215, Gly241, Ile242, His243, Gln284, and Glu298. Residues 133-327 (KELCQKLGEP…IAKMAAKIAI (195 aa)) form the ATP-grasp 1 domain. Gln284, Glu298, and Asn300 together coordinate Mg(2+). Mn(2+) contacts are provided by Gln284, Glu298, and Asn300. Residues 402–546 (IDEKDLYSAK…YSTYDGENES (145 aa)) are oligomerization domain. Residues 547–929 (RKSGKKSVIV…ALYKAFAGAK (383 aa)) form a carbamoyl phosphate synthetic domain region. In terms of domain architecture, ATP-grasp 2 spans 671–861 (DQIIKSLHLH…MAQVATRVIM (191 aa)). ATP contacts are provided by Arg707, Asp746, Leu748, Glu752, Gly777, Val778, His779, Ser780, Gln820, and Glu832. Mg(2+) contacts are provided by Gln820, Glu832, and Asn834. Mn(2+)-binding residues include Gln820, Glu832, and Asn834. Positions 930 to 1062 (MQLPENGNVL…NRSFATDALK (133 aa)) constitute an MGS-like domain. The tract at residues 930-1062 (MQLPENGNVL…NRSFATDALK (133 aa)) is allosteric domain.

It belongs to the CarB family. As to quaternary structure, composed of two chains; the small (or glutamine) chain promotes the hydrolysis of glutamine to ammonia, which is used by the large (or ammonia) chain to synthesize carbamoyl phosphate. Tetramer of heterodimers (alpha,beta)4. Mg(2+) is required as a cofactor. Requires Mn(2+) as cofactor.

The enzyme catalyses hydrogencarbonate + L-glutamine + 2 ATP + H2O = carbamoyl phosphate + L-glutamate + 2 ADP + phosphate + 2 H(+). It catalyses the reaction hydrogencarbonate + NH4(+) + 2 ATP = carbamoyl phosphate + 2 ADP + phosphate + 2 H(+). Its pathway is amino-acid biosynthesis; L-arginine biosynthesis; carbamoyl phosphate from bicarbonate: step 1/1. The protein operates within pyrimidine metabolism; UMP biosynthesis via de novo pathway; (S)-dihydroorotate from bicarbonate: step 1/3. Large subunit of the glutamine-dependent carbamoyl phosphate synthetase (CPSase). CPSase catalyzes the formation of carbamoyl phosphate from the ammonia moiety of glutamine, carbonate, and phosphate donated by ATP, constituting the first step of 2 biosynthetic pathways, one leading to arginine and/or urea and the other to pyrimidine nucleotides. The large subunit (synthetase) binds the substrates ammonia (free or transferred from glutamine from the small subunit), hydrogencarbonate and ATP and carries out an ATP-coupled ligase reaction, activating hydrogencarbonate by forming carboxy phosphate which reacts with ammonia to form carbamoyl phosphate. In Lactobacillus helveticus (strain DPC 4571), this protein is Carbamoyl phosphate synthase large chain.